The chain runs to 462 residues: Sonic hedgehog protein (462 aa).

The N-terminal stretch at 1-23 (MLLLARCLLLVLVSSLLVCSGLA) is a signal peptide. The N-palmitoyl cysteine moiety is linked to residue Cys-24. Residues 32 to 38 (KRRHPKK) carry the Cardin-Weintraub motif. Ca(2+) is bound by residues Glu-89, Glu-90, Asp-95, Thr-125, Glu-126, Asp-129, and Asp-131. Zn(2+)-binding residues include His-140, Asp-147, and His-182. The Cholesterol glycine ester moiety is linked to residue Gly-197. N-linked (GlcNAc...) asparagine glycosylation occurs at Asn-278. Disordered regions lie at residues 279–302 (DSATGEPEASSGSGPPSGGALGPR) and 395–414 (TDRGGDSGGGDRGGGGGRVA). The segment covering 283-292 (GEPEASSGSG) has biased composition (low complexity). The span at 400–412 (DSGGGDRGGGGGR) shows a compositional bias: gly residues.

Belongs to the hedgehog family. In terms of assembly, multimer. Interacts with HHATL/GUP1 which negatively regulates HHAT-mediated palmitoylation of the SHH N-terminus. Interacts with BOC and CDON. Interacts with HHIP. Interacts with DISP1 via its cholesterol anchor. Interacts with SCUBE2. Interacts with glypican GPC3. The C-terminal domain displays an autoproteolysis activity and a cholesterol transferase activity. Both activities result in the cleavage of the full-length protein and covalent attachment of a cholesterol moiety to the C-terminal of the newly generated N-terminal fragment (ShhN). Cholesterylation is required for the sonic hedgehog protein N-product targeting to lipid rafts and multimerization. ShhN is the active species in both local and long-range signaling, whereas the C-product (ShhC) is degraded in the endoplasmic reticulum. Post-translationally, N-palmitoylation by HHAT of ShhN is required for sonic hedgehog protein N-product multimerization and full activity. It is a prerequisite for the membrane-proximal positioning and the subsequent shedding of this N-terminal peptide. In terms of processing, the lipidated N- and C-terminal peptides of ShhNp can be cleaved (shedding). The N-terminal palmitoylated peptide is cleaved at the Cardin-Weintraub (CW) motif site. The cleavage reduced the interactions with heparan sulfate. The cleavage is enhanced by SCUBE2.

It localises to the endoplasmic reticulum membrane. The protein resides in the golgi apparatus membrane. Its subcellular location is the secreted. It is found in the cell membrane. It carries out the reaction glycyl-L-cysteinyl-[protein] + cholesterol + H(+) = [protein]-C-terminal glycyl cholesterol ester + N-terminal L-cysteinyl-[protein]. In terms of biological role, the C-terminal part of the sonic hedgehog protein precursor displays an autoproteolysis and a cholesterol transferase activity. Both activities result in the cleavage of the full-length protein into two parts (ShhN and ShhC) followed by the covalent attachment of a cholesterol moiety to the C-terminal of the newly generated ShhN. Both activities occur in the endoplasmic reticulum. Once cleaved, ShhC is degraded in the endoplasmic reticulum. Functionally, the dually lipidated sonic hedgehog protein N-product (ShhNp) is a morphogen which is essential for a variety of patterning events during development. Induces ventral cell fate in the neural tube and somites. Involved in the patterning of the anterior-posterior axis of the developing limb bud. Essential for axon guidance. Binds to the patched (PTCH1) receptor, which functions in association with smoothened (SMO), to activate the transcription of target genes. In the absence of SHH, PTCH1 represses the constitutive signaling activity of SMO. The sequence is that of Sonic hedgehog protein from Homo sapiens (Human).